The chain runs to 230 residues: Uracil-DNA glycosylase (230 aa).

Asp-70 serves as the catalytic Proton acceptor.

The protein belongs to the uracil-DNA glycosylase (UDG) superfamily. UNG family.

The protein localises to the cytoplasm. The catalysed reaction is Hydrolyzes single-stranded DNA or mismatched double-stranded DNA and polynucleotides, releasing free uracil.. In terms of biological role, excises uracil residues from the DNA which can arise as a result of misincorporation of dUMP residues by DNA polymerase or due to deamination of cytosine. This chain is Uracil-DNA glycosylase, found in Pseudomonas putida (strain GB-1).